Here is a 302-residue protein sequence, read N- to C-terminus: Rab effector Noc2 (302 aa).

A RabBD domain is found at 41–158 (QRRTQCLSPG…KRSGAWFYKG (118 aa)). The FYVE-type zinc finger occupies 89–146 (GNGVSQCLLCGEMLGFLGSSSVFCKDCRKKVCTKCGIEASPGQKRPLWLCKICSEQRE). The Zn(2+) site is built by Cys95, Cys98, Cys112, Cys115, Cys120, Cys123, Cys138, and Cys141. 2 disordered regions span residues 174-194 (DPHFRPLPVEPTEPQPQSAEV) and 206-302 (VSSD…TTHY). Position 248 is a phosphoserine (Ser248). Residues 258–269 (SHLSGSQSSLGS) are compositionally biased toward low complexity.

In terms of assembly, recruited to dense-core vesicles through specific interaction with RAB27A in endocrine cells. Interacts with RAB3A, RAB3B, RAB3C and RAB3D. Interacts with ZYX. Highly expressed in pancreatic islets and parotid. High to moderate expression in adrenal gland, pituitary gland and ovary.

The protein localises to the cytoplasm. It localises to the cytoplasmic vesicle. It is found in the secretory vesicle membrane. In terms of biological role, rab GTPase effector involved in the late steps of regulated exocytosis, both in endocrine and exocrine cells. Regulates the exocytosis of dense-core vesicles in neuroendocrine cells through interaction with RAB27A. Acts as a potential RAB3B effector protein in epithelial cells. The sequence is that of Rab effector Noc2 (Rph3al) from Rattus norvegicus (Rat).